Here is a 449-residue protein sequence, read N- to C-terminus: Elongation factor 1-alpha 1 (449 aa).

A tr-type G domain is found at 5–230 (KVHMNLVVVG…DMLEPPVRPS (226 aa)). The G1 stretch occupies residues 14–21 (GHVDAGKS). 14–21 (GHVDAGKS) is a GTP binding site. The segment at 70–74 (GITID) is G2. The interval 91-94 (DAPG) is G3. GTP is bound by residues 91-95 (DAPGH) and 153-156 (NKMD). The interval 153–156 (NKMD) is G4. The segment at 194–196 (SGW) is G5. E362 is subject to 5-glutamyl glycerylphosphorylethanolamine.

This sequence belongs to the TRAFAC class translation factor GTPase superfamily. Classic translation factor GTPase family. EF-Tu/EF-1A subfamily. In terms of processing, phosphatidylethanolamine (PE) is a direct precursor of the ethanolamine-phosphoglycerol (EPG) moiety.

The protein localises to the cytoplasm. Its function is as follows. This protein promotes the GTP-dependent binding of aminoacyl-tRNA to the A-site of ribosomes during protein biosynthesis. The sequence is that of Elongation factor 1-alpha 1 (TEF1) from Trypanosoma brucei brucei (strain 927/4 GUTat10.1).